We begin with the raw amino-acid sequence, 415 residues long: Queuine tRNA-ribosyltransferase accessory subunit 2 (415 aa).

Residues Cys-351, Cys-353, Cys-356, and His-382 each contribute to the Zn(2+) site.

The protein belongs to the queuine tRNA-ribosyltransferase family. QTRT2 subfamily. Heterodimer of a catalytic subunit QTRT1 and an accessory subunit QTRT2. It depends on Zn(2+) as a cofactor.

The protein resides in the cytoplasm. Its subcellular location is the mitochondrion outer membrane. Its function is as follows. Non-catalytic subunit of the queuine tRNA-ribosyltransferase (TGT) that catalyzes the base-exchange of a guanine (G) residue with queuine (Q) at position 34 (anticodon wobble position) in tRNAs with GU(N) anticodons (tRNA-Asp, -Asn, -His and -Tyr), resulting in the hypermodified nucleoside queuosine (7-(((4,5-cis-dihydroxy-2-cyclopenten-1-yl)amino)methyl)-7-deazaguanosine). In Pongo abelii (Sumatran orangutan), this protein is Queuine tRNA-ribosyltransferase accessory subunit 2.